The sequence spans 276 residues: Borealin (276 aa).

Positions 111-158 are disordered; it reads KEAKSSANSEDENMAPLKSTMKKKKASKKAPSTSKKPRTLSISKQGGT.

It belongs to the borealin family. In terms of assembly, component of the CPC complex.

Its subcellular location is the nucleus. The protein localises to the chromosome. It is found in the centromere. It localises to the cytoplasm. The protein resides in the cytoskeleton. Its subcellular location is the spindle. Its function is as follows. Component of the chromosomal passenger complex (CPC), a complex that acts as a key regulator of mitosis. The CPC complex has essential functions at the centromere in ensuring correct chromosome alignment and segregation and is required for chromatin-induced microtubule stabilization and spindle assembly. This chain is Borealin (cdca8), found in Danio rerio (Zebrafish).